An 89-amino-acid polypeptide reads, in one-letter code: Large ribosomal subunit protein bL28 (89 aa).

This sequence belongs to the bacterial ribosomal protein bL28 family.

The chain is Large ribosomal subunit protein bL28 from Chlamydia abortus (strain DSM 27085 / S26/3) (Chlamydophila abortus).